The chain runs to 125 residues: Holo-[acyl-carrier-protein] synthase (125 aa).

Residues Asp-8 and Glu-57 each coordinate Mg(2+).

The protein belongs to the P-Pant transferase superfamily. AcpS family. Mg(2+) serves as cofactor.

It localises to the cytoplasm. It carries out the reaction apo-[ACP] + CoA = holo-[ACP] + adenosine 3',5'-bisphosphate + H(+). In terms of biological role, transfers the 4'-phosphopantetheine moiety from coenzyme A to a Ser of acyl-carrier-protein. In Neisseria meningitidis serogroup A / serotype 4A (strain DSM 15465 / Z2491), this protein is Holo-[acyl-carrier-protein] synthase.